The following is a 512-amino-acid chain: Probable cobyric acid synthase (512 aa).

Positions 275–460 (SVTVAVPHLP…LHGLFGNDAA (186 aa)) constitute a GATase cobBQ-type domain. C353 serves as the catalytic Nucleophile. H452 is an active-site residue.

This sequence belongs to the CobB/CobQ family. CobQ subfamily.

It participates in cofactor biosynthesis; adenosylcobalamin biosynthesis. Its function is as follows. Catalyzes amidations at positions B, D, E, and G on adenosylcobyrinic A,C-diamide. NH(2) groups are provided by glutamine, and one molecule of ATP is hydrogenolyzed for each amidation. The polypeptide is Probable cobyric acid synthase (Halobacterium salinarum (strain ATCC 29341 / DSM 671 / R1)).